The sequence spans 106 residues: Immunoglobulin lambda constant 7 (106 aa).

The Ig-like domain maps to proline 7–alanine 101. A disulfide bridge connects residues cysteine 28 and cysteine 87.

Immunoglobulins are composed of two identical heavy chains and two identical light chains; disulfide-linked.

Its subcellular location is the secreted. It localises to the cell membrane. Constant region of immunoglobulin light chains. Immunoglobulins, also known as antibodies, are membrane-bound or secreted glycoproteins produced by B lymphocytes. In the recognition phase of humoral immunity, the membrane-bound immunoglobulins serve as receptors which, upon binding of a specific antigen, trigger the clonal expansion and differentiation of B lymphocytes into immunoglobulins-secreting plasma cells. Secreted immunoglobulins mediate the effector phase of humoral immunity, which results in the elimination of bound antigens. The antigen binding site is formed by the variable domain of one heavy chain, together with that of its associated light chain. Thus, each immunoglobulin has two antigen binding sites with remarkable affinity for a particular antigen. The variable domains are assembled by a process called V-(D)-J rearrangement and can then be subjected to somatic hypermutations which, after exposure to antigen and selection, allow affinity maturation for a particular antigen. This is Immunoglobulin lambda constant 7 from Homo sapiens (Human).